A 141-amino-acid polypeptide reads, in one-letter code: Large ribosomal subunit protein uL11 (141 aa).

It belongs to the universal ribosomal protein uL11 family. In terms of assembly, part of the ribosomal stalk of the 50S ribosomal subunit. Interacts with L10 and the large rRNA to form the base of the stalk. L10 forms an elongated spine to which L12 dimers bind in a sequential fashion forming a multimeric L10(L12)X complex. In terms of processing, one or more lysine residues are methylated.

Forms part of the ribosomal stalk which helps the ribosome interact with GTP-bound translation factors. This chain is Large ribosomal subunit protein uL11, found in Crocosphaera subtropica (strain ATCC 51142 / BH68) (Cyanothece sp. (strain ATCC 51142)).